A 141-amino-acid polypeptide reads, in one-letter code: Hemoglobin subunit alpha (141 aa).

A Globin domain is found at 1-141; the sequence is VLSANDKSNV…VSTVLTSKYR (141 aa). Serine 3 carries the post-translational modification Phosphoserine. An N6-succinyllysine mark is found at lysine 7 and lysine 11. An N6-acetyllysine; alternate modification is found at lysine 16. Residue lysine 16 is modified to N6-succinyllysine; alternate. At tyrosine 24 the chain carries Phosphotyrosine. Phosphoserine is present on serine 35. An N6-succinyllysine modification is found at lysine 40. Serine 49 carries the post-translational modification Phosphoserine. Histidine 58 is an O2 binding site. Residue histidine 87 coordinates heme b. The residue at position 102 (serine 102) is a Phosphoserine. Threonine 108 bears the Phosphothreonine mark. Serine 124 carries the post-translational modification Phosphoserine. Threonine 134 and threonine 137 each carry phosphothreonine. At serine 138 the chain carries Phosphoserine.

Belongs to the globin family. In terms of assembly, heterotetramer of two alpha chains and two beta chains. Red blood cells.

Functionally, involved in oxygen transport from the lung to the various peripheral tissues. Hemopressin acts as an antagonist peptide of the cannabinoid receptor CNR1. Hemopressin-binding efficiently blocks cannabinoid receptor CNR1 and subsequent signaling. The polypeptide is Hemoglobin subunit alpha (HBA) (Hippopotamus amphibius (Hippopotamus)).